An 88-amino-acid polypeptide reads, in one-letter code: uncharacterized protein (88 aa).

2 consecutive transmembrane segments (helical) span residues 8–28 and 45–65; these read IFLSFFSPIYLSLLLNGSIFF and ELLRCQICLCSLFWMVTVINL.

The protein resides in the membrane. This is an uncharacterized protein from Saccharomyces cerevisiae (strain ATCC 204508 / S288c) (Baker's yeast).